Consider the following 207-residue polypeptide: Twist-related protein 1 (207 aa).

The span at 1–18 (MMQDVSSSPVSPADDSLS) shows a compositional bias: low complexity. Residues 1–110 (MMQDVSSSPV…GGGSPQSYEE (110 aa)) are disordered. Basic residues predominate over residues 34–43 (RGGRKRRSSR). Gly residues-rich tracts occupy residues 46–65 (AGGGAGPGGAAGGGVGGGDE) and 80–104 (GCGGGGSAGGGGGGGGGGSSSGGGS). The 52-residue stretch at 113 to 164 (TQRVMANVRERQRTQSLNEAFAALRKIIPTLPSDKLSKIQTLKLAARYIDFL) folds into the bHLH domain. The interval 166–196 (QVLQSDELDSKMASCSYVAHERLSYAFSVWR) is sufficient for transactivation activity.

Efficient DNA binding requires dimerization with another bHLH protein. Homodimer or heterodimer with E proteins such as TCF3. ID1 binds preferentially to TCF3 but does not interact efficiently with TWIST1 so ID1 levels control the amount of TCF3 available to dimerize with TWIST and thus determine the type of dimer formed.

The protein resides in the nucleus. In terms of biological role, acts as a transcriptional regulator. Inhibits myogenesis by sequestrating E proteins, inhibiting trans-activation by MEF2, and inhibiting DNA-binding by MYOD1 through physical interaction. This interaction probably involves the basic domains of both proteins. Also represses expression of pro-inflammatory cytokines such as TNFA and IL1B. Regulates cranial suture patterning and fusion. Activates transcription as a heterodimer with E proteins. Regulates gene expression differentially, depending on dimer composition. Homodimers induce expression of FGFR2 and POSTN while heterodimers repress FGFR2 and POSTN expression and induce THBS1 expression. Heterodimerization is also required for osteoblast differentiation. Represses the activity of the circadian transcriptional activator: NPAS2-BMAL1 heterodimer. This Cebus capucinus (White-faced sapajou) protein is Twist-related protein 1 (TWIST1).